A 233-amino-acid polypeptide reads, in one-letter code: MTPHINAKIGDFYPQCLLCGDPLRVSYIAKKFLQDAKEITNVRNMLGFSGKYKGRGISLMGHGMGIASCTIYVTELIKTYQVKELLRIGTCGAISPKVGLKDIIMATGASTDSKTNRVRFLNHDLSATPDFELSLRAYQTAKRLGIDLKVGNVFSSDFFYSFETHAFDLMAKYNHLAIEMEAAGLYATAMELNAKALCLCSVSDHLITKEALSPKERVESFDNMIILALEMMS.

His-4 lines the a purine D-ribonucleoside pocket. Residues Gly-20, Arg-24, Arg-43, and 87–90 each bind phosphate; that span reads RIGT. A purine D-ribonucleoside-binding positions include 179 to 181 and 203 to 204; these read EME and SD. Asp-204 (proton donor) is an active-site residue.

The protein belongs to the PNP/UDP phosphorylase family. In terms of assembly, homohexamer; trimer of homodimers.

The enzyme catalyses a purine D-ribonucleoside + phosphate = a purine nucleobase + alpha-D-ribose 1-phosphate. It carries out the reaction a purine 2'-deoxy-D-ribonucleoside + phosphate = a purine nucleobase + 2-deoxy-alpha-D-ribose 1-phosphate. In terms of biological role, catalyzes the reversible phosphorolytic breakdown of the N-glycosidic bond in the beta-(deoxy)ribonucleoside molecules, with the formation of the corresponding free purine bases and pentose-1-phosphate. The polypeptide is Purine nucleoside phosphorylase DeoD-type (Helicobacter pylori (strain ATCC 700392 / 26695) (Campylobacter pylori)).